The following is a 136-amino-acid chain: ATP synthase epsilon chain (136 aa).

The disordered stretch occupies residues A104–D136.

Belongs to the ATPase epsilon chain family. As to quaternary structure, F-type ATPases have 2 components, CF(1) - the catalytic core - and CF(0) - the membrane proton channel. CF(1) has five subunits: alpha(3), beta(3), gamma(1), delta(1), epsilon(1). CF(0) has three main subunits: a, b and c.

The protein resides in the cellular thylakoid membrane. Produces ATP from ADP in the presence of a proton gradient across the membrane. The sequence is that of ATP synthase epsilon chain from Synechococcus sp. (strain CC9902).